Reading from the N-terminus, the 445-residue chain is Probable aminotransferase TAT3 (445 aa).

Belongs to the class-I pyridoxal-phosphate-dependent aminotransferase family. Pyridoxal 5'-phosphate is required as a cofactor. Expressed in roots, leaves and cauline leaves.

This is Probable aminotransferase TAT3 (TAT3) from Arabidopsis thaliana (Mouse-ear cress).